The chain runs to 266 residues: Undecaprenyl-diphosphatase (266 aa).

8 helical membrane passes run 4-24 (WLIA…PVSS), 46-66 (VLIQ…RLWG), 82-102 (IGIL…HDFI), 105-125 (VLYE…FILL), 142-162 (YPLK…VPGV), 182-202 (AAEF…AYDL), 216-236 (LIGI…KTVL), and 244-264 (FAPF…LLYI).

The protein belongs to the UppP family.

Its subcellular location is the cell inner membrane. It catalyses the reaction di-trans,octa-cis-undecaprenyl diphosphate + H2O = di-trans,octa-cis-undecaprenyl phosphate + phosphate + H(+). Catalyzes the dephosphorylation of undecaprenyl diphosphate (UPP). Confers resistance to bacitracin. This is Undecaprenyl-diphosphatase from Caulobacter vibrioides (strain ATCC 19089 / CIP 103742 / CB 15) (Caulobacter crescentus).